Consider the following 388-residue polypeptide: Deoxyguanosinetriphosphate triphosphohydrolase-like protein (388 aa).

The tract at residues histidine 24–phenylalanine 44 is disordered. One can recognise an HD domain in the interval arginine 78–asparagine 209.

The protein belongs to the dGTPase family. Type 2 subfamily.

This is Deoxyguanosinetriphosphate triphosphohydrolase-like protein from Ralstonia pickettii (strain 12J).